The sequence spans 204 residues: Linker for activation of T-cells family member 2 (204 aa).

Over 1–7 the chain is Extracellular; that stretch reads MNAELEL. Residues 8 to 28 form a helical; Signal-anchor for type III membrane protein membrane-spanning segment; sequence LWPLSGLLLLLLLGTTAWLCV. 2 S-palmitoyl cysteine lipidation sites follow: Cys27 and Cys30. The Cytoplasmic portion of the chain corresponds to 29-204; sequence QCSRPGVKRN…NGDVATTEKI (176 aa). Phosphotyrosine is present on Tyr60. 2 positions are modified to phosphoserine: Ser61 and Ser96. Phosphotyrosine is present on residues Tyr140, Tyr161, and Tyr193. The disordered stretch occupies residues 147-204; sequence KPSTPESGTEESEDYQNSVSILQWRESKRTMGARTSPSGSPDEEPDYVNGDVATTEKI.

When phosphorylated, interacts with GRB2. May also interact with SOS1, GAB1 and CBL. Phosphorylated on tyrosines following cross-linking of BCR in B-cells, high affinity IgG receptor (FCGR1) in myeloid cells, or high affinity IgE receptor (FCER1) in mast cells; which induces the recruitment of GRB2.

The protein localises to the cell membrane. In terms of biological role, involved in FCER1 (high affinity immunoglobulin epsilon receptor)-mediated signaling in mast cells. May also be involved in BCR (B-cell antigen receptor)-mediated signaling in B-cells and FCGR1 (high affinity immunoglobulin gamma Fc receptor I)-mediated signaling in myeloid cells. Couples activation of these receptors and their associated kinases with distal intracellular events through the recruitment of GRB2. The protein is Linker for activation of T-cells family member 2 (Lat2) of Rattus norvegicus (Rat).